A 411-amino-acid chain; its full sequence is Peptidase T (411 aa).

His-78 lines the Zn(2+) pocket. Residue Asp-80 is part of the active site. Residue Asp-140 participates in Zn(2+) binding. Residue Glu-173 is the Proton acceptor of the active site. Zn(2+) is bound by residues Glu-174, Asp-196, and His-379.

This sequence belongs to the peptidase M20B family. Zn(2+) serves as cofactor.

It localises to the cytoplasm. It carries out the reaction Release of the N-terminal residue from a tripeptide.. Cleaves the N-terminal amino acid of tripeptides. This Yersinia pseudotuberculosis serotype O:1b (strain IP 31758) protein is Peptidase T.